A 373-amino-acid polypeptide reads, in one-letter code: Mitochondrial nicotinamide adenine dinucleotide transporter 1 (373 aa).

The Mitochondrial matrix portion of the chain corresponds to 1–80 (MTQTDNPVPN…WVPLSSTQIT (80 aa)). Solcar repeat units follow at residues 75–166 (SSTQ…SKKF), 174–263 (FDFV…LKVR), and 276–364 (INLQ…FRNR). Residues 81–101 (ALSGAFAGFLSGVAVCPLDVA) traverse the membrane as a helical segment. Over 102–141 (KTRLQAQGLQTRFENPYYRGIMGTLSTIVRDEGPRGLYKG) the chain is Mitochondrial intermembrane. A helical transmembrane segment spans residues 142–162 (LVPIVLGYFPTWMIYFSVYEF). Topologically, residues 163 to 176 (SKKFFHGIFPQFDF) are mitochondrial matrix. A helical transmembrane segment spans residues 177–199 (VAQSCAAITAGAASTTLTNPIWV). Over 200–235 (VKTRLMLQSNLGEHPTHYKGTFDAFRKLFYQEGFKA) the chain is Mitochondrial intermembrane. A helical membrane pass occupies residues 236–256 (LYAGLVPSLLGLFHVAIHFPI). Topologically, residues 257–280 (YEDLKVRFHCYSRENNTNSINLQR) are mitochondrial matrix. The chain crosses the membrane as a helical span at residues 281–297 (LIMASSVSKMIASAVTY). At 298–335 (PHEILRTRMQLKSDIPDSIQRRLFPLIKATYAQEGLKG) the chain is on the mitochondrial intermembrane side. The chain crosses the membrane as a helical span at residues 336–358 (FYSGFTTNLVRTIPASAITLVSF). The Mitochondrial matrix portion of the chain corresponds to 359–373 (EYFRNRLENISTMVI).

It belongs to the mitochondrial carrier (TC 2.A.29) family.

It is found in the mitochondrion inner membrane. It catalyses the reaction dAMP(in) + NAD(+)(out) = dAMP(out) + NAD(+)(in). It carries out the reaction dGMP(in) + NAD(+)(out) = dGMP(out) + NAD(+)(in). The enzyme catalyses GMP(in) + NAD(+)(out) = GMP(out) + NAD(+)(in). The catalysed reaction is AMP(in) + NAD(+)(out) = AMP(out) + NAD(+)(in). It catalyses the reaction deamido-NAD(+)(in) + NAD(+)(out) = deamido-NAD(+)(out) + NAD(+)(in). Its function is as follows. Mitochondrial inner membrane carrier protein that mediates the import of NAD(+) into mitochondria. Can transport NAD(+) by unidirectional transport or by exchange with intramitochondrially generated dAMP and dGMP. Also able to transport NAD(+) by exchange with AMP, GMP or deamido-NAD (+) in vitro. This Saccharomyces cerevisiae (strain ATCC 204508 / S288c) (Baker's yeast) protein is Mitochondrial nicotinamide adenine dinucleotide transporter 1 (YIA6).